We begin with the raw amino-acid sequence, 595 residues long: uncharacterized protein (595 aa).

The tract at residues 1 to 21 is disordered; it reads MSSQLKSTWAPVPSTKPSQPC. WD repeat units lie at residues 56-95, 100-143, 144-184, 187-226, 229-268, 313-352, 356-393, 433-472, 477-516, 520-559, and 564-594; these read EHTA…KILK, AISG…GEIF, GHSS…FNRS, VHSK…QVYE, AHKG…LIRE, GHQR…AFPL, SHTN…FAKD, KTIY…LCEV, DSTA…VITS, FHTG…KYIA, and HSLG…WSVT.

This sequence belongs to the WD repeat AIP1 family.

This is an uncharacterized protein from Schizosaccharomyces pombe (strain 972 / ATCC 24843) (Fission yeast).